The following is a 348-amino-acid chain: Chaperone protein DnaJ (348 aa).

One can recognise a J domain in the interval 3–65 (DLYGILGVDH…EQRQRYDRHV (63 aa)). The segment at 109–191 (GGSQVVKIDS…CYGNGSRSAP (83 aa)) adopts a CR-type zinc-finger fold. Zn(2+) contacts are provided by C122, C125, C139, C142, C165, C168, C179, and C182. CXXCXGXG motif repeat units lie at residues 122 to 129 (CDVCNGTR), 139 to 146 (CFDCNGSG), 165 to 172 (CSKCRGNG), and 179 to 186 (CRRCYGNG).

The protein belongs to the DnaJ family. As to quaternary structure, homodimer. It depends on Zn(2+) as a cofactor.

It is found in the cytoplasm. Functionally, participates actively in the response to hyperosmotic and heat shock by preventing the aggregation of stress-denatured proteins and by disaggregating proteins, also in an autonomous, DnaK-independent fashion. Unfolded proteins bind initially to DnaJ; upon interaction with the DnaJ-bound protein, DnaK hydrolyzes its bound ATP, resulting in the formation of a stable complex. GrpE releases ADP from DnaK; ATP binding to DnaK triggers the release of the substrate protein, thus completing the reaction cycle. Several rounds of ATP-dependent interactions between DnaJ, DnaK and GrpE are required for fully efficient folding. Also involved, together with DnaK and GrpE, in the DNA replication of plasmids through activation of initiation proteins. The sequence is that of Chaperone protein DnaJ from Tropheryma whipplei (strain TW08/27) (Whipple's bacillus).